Here is a 357-residue protein sequence, read N- to C-terminus: Anthranilate phosphoribosyltransferase (357 aa).

Residues glycine 91, 94–95, threonine 99, 101–104, 119–127, and serine 131 contribute to the 5-phospho-alpha-D-ribose 1-diphosphate site; these read GD, NIST, and KHGNRSVSS. Residue glycine 91 participates in anthranilate binding. Residue serine 103 participates in Mg(2+) binding. An anthranilate-binding site is contributed by asparagine 122. Arginine 177 contributes to the anthranilate binding site. Aspartate 235 and glutamate 236 together coordinate Mg(2+).

This sequence belongs to the anthranilate phosphoribosyltransferase family. As to quaternary structure, homodimer. It depends on Mg(2+) as a cofactor.

It carries out the reaction N-(5-phospho-beta-D-ribosyl)anthranilate + diphosphate = 5-phospho-alpha-D-ribose 1-diphosphate + anthranilate. Its pathway is amino-acid biosynthesis; L-tryptophan biosynthesis; L-tryptophan from chorismate: step 2/5. Its function is as follows. Catalyzes the transfer of the phosphoribosyl group of 5-phosphorylribose-1-pyrophosphate (PRPP) to anthranilate to yield N-(5'-phosphoribosyl)-anthranilate (PRA). The protein is Anthranilate phosphoribosyltransferase of Shewanella baltica (strain OS155 / ATCC BAA-1091).